Consider the following 305-residue polypeptide: tRNA dimethylallyltransferase 1 (305 aa).

10–17 (GPTASGKS) serves as a coordination point for ATP. 12 to 17 (TASGKS) contacts substrate. The segment at 35–38 (DSLT) is interaction with substrate tRNA.

It belongs to the IPP transferase family. Monomer. Mg(2+) serves as cofactor.

It catalyses the reaction adenosine(37) in tRNA + dimethylallyl diphosphate = N(6)-dimethylallyladenosine(37) in tRNA + diphosphate. Catalyzes the transfer of a dimethylallyl group onto the adenine at position 37 in tRNAs that read codons beginning with uridine, leading to the formation of N6-(dimethylallyl)adenosine (i(6)A). The polypeptide is tRNA dimethylallyltransferase 1 (Trichlorobacter lovleyi (strain ATCC BAA-1151 / DSM 17278 / SZ) (Geobacter lovleyi)).